The following is a 280-amino-acid chain: 4-deoxy-L-threo-5-hexosulose-uronate ketol-isomerase (280 aa).

Residues His-198, His-200, Glu-205, and His-247 each contribute to the Zn(2+) site.

It belongs to the KduI family. Zn(2+) serves as cofactor.

It is found in the cytoplasm. It carries out the reaction 5-dehydro-4-deoxy-D-glucuronate = 3-deoxy-D-glycero-2,5-hexodiulosonate. Functionally, isomerase involved in ulvan degradation. Ulvan is the main polysaccharide component of the Ulvales (green seaweed) cell wall. It is composed of disaccharide building blocks comprising 3-sulfated rhamnose (Rha3S) linked to D-glucuronic acid (GlcA), L-iduronic acid (IduA), or D-xylose (Xyl). Catalyzes the isomerization of 5-dehydro-4-deoxy-D-glucuronate to 3-deoxy-D-glycero-2,5-hexodiulosonate. The protein is 4-deoxy-L-threo-5-hexosulose-uronate ketol-isomerase of Formosa agariphila (strain DSM 15362 / KCTC 12365 / LMG 23005 / KMM 3901 / M-2Alg 35-1).